We begin with the raw amino-acid sequence, 198 residues long: Probable GTP-binding protein EngB (198 aa).

Residues 22 to 195 enclose the EngB-type G domain; it reads NIPEVALAGR…LEVIGRWVGL (174 aa). GTP contacts are provided by residues 30–37, 57–61, 75–78, 142–145, and 174–176; these read GRSNVGKS, GRTRL, DLPG, TKAD, and FSA. Residues Ser37 and Thr59 each coordinate Mg(2+).

Belongs to the TRAFAC class TrmE-Era-EngA-EngB-Septin-like GTPase superfamily. EngB GTPase family. The cofactor is Mg(2+).

Its function is as follows. Necessary for normal cell division and for the maintenance of normal septation. The protein is Probable GTP-binding protein EngB of Pelotomaculum thermopropionicum (strain DSM 13744 / JCM 10971 / SI).